A 151-amino-acid chain; its full sequence is Large ribosomal subunit protein bL9 (151 aa).

The protein belongs to the bacterial ribosomal protein bL9 family.

Its function is as follows. Binds to the 23S rRNA. The chain is Large ribosomal subunit protein bL9 from Prochlorococcus marinus (strain MIT 9301).